A 313-amino-acid chain; its full sequence is 2-dehydro-3-deoxygluconokinase/2-dehydro-3-deoxygalactonokinase (313 aa).

Substrate is bound by residues 34–38 (GSELN), tyrosine 90, 106–108 (YYR), and arginine 166. ATP is bound by residues 164–166 (NIR), 226–231 (KLGSKG), and 255–258 (GAGD). Residues aspartate 258 and aspartate 294 each coordinate substrate. Aspartate 258 (proton acceptor) is an active-site residue.

Homohexamer; trimer of dimers.

It catalyses the reaction 2-dehydro-3-deoxy-D-gluconate + ATP = 2-dehydro-3-deoxy-6-phospho-D-gluconate + ADP + H(+). The catalysed reaction is 2-dehydro-3-deoxy-D-galactonate + ATP = 2-dehydro-3-deoxy-6-phospho-D-galactonate + ADP + H(+). It participates in carbohydrate acid metabolism; 2-dehydro-3-deoxy-D-gluconate degradation; D-glyceraldehyde 3-phosphate and pyruvate from 2-dehydro-3-deoxy-D-gluconate: step 1/2. Involved in the degradation of glucose and galactose via the semi-phosphorylative Entner-Doudoroff pathway. Catalyzes the phosphorylation of 2-keto-3-deoxygluconate (KDG) and 2-keto-3-deoxygalactonate (KDGal) to produce 2-keto-3-deoxy-6-phosphogluconate (KDPG) and 2-keto-3-deoxy-6-phosphogalactonate (KDPGal), respectively. This Saccharolobus solfataricus (strain ATCC 35092 / DSM 1617 / JCM 11322 / P2) (Sulfolobus solfataricus) protein is 2-dehydro-3-deoxygluconokinase/2-dehydro-3-deoxygalactonokinase (kdgK).